The following is a 73-amino-acid chain: Translation initiation factor IF-1 (73 aa).

One can recognise an S1-like domain in the interval 1–73; the sequence is MAKKDGAIEI…TRGRIVYRYK (73 aa).

Belongs to the IF-1 family. Component of the 30S ribosomal translation pre-initiation complex which assembles on the 30S ribosome in the order IF-2 and IF-3, IF-1 and N-formylmethionyl-tRNA(fMet); mRNA recruitment can occur at any time during PIC assembly.

The protein localises to the cytoplasm. Functionally, one of the essential components for the initiation of protein synthesis. Stabilizes the binding of IF-2 and IF-3 on the 30S subunit to which N-formylmethionyl-tRNA(fMet) subsequently binds. Helps modulate mRNA selection, yielding the 30S pre-initiation complex (PIC). Upon addition of the 50S ribosomal subunit IF-1, IF-2 and IF-3 are released leaving the mature 70S translation initiation complex. The polypeptide is Translation initiation factor IF-1 (Thermobifida fusca (strain YX)).